A 793-amino-acid chain; its full sequence is Protein smoothened (793 aa).

The signal sequence occupies residues 1–32; sequence MAAGRPVRGPELAPRRLLQLLLLVLLGGPGRG. The Extracellular portion of the chain corresponds to 33 to 237; sequence AALSGNVTGP…EAEHQDMHSY (205 aa). The segment at 35-61 is disordered; it reads LSGNVTGPGPHSASGSSRRDVPVTSPP. An N-linked (GlcNAc...) asparagine glycan is attached at Asn38. Intrachain disulfides connect Cys68/Cys182, Cys74/Cys138, Cys82/Cys131, Cys122/Cys158, and Cys151/Cys173. Residues 69–185 form the FZ domain; that stretch reads GRAAHCEPLR…DHFPEGCPNE (117 aa). Asp99 provides a ligand contact to cholesterol. Asn192 carries N-linked (GlcNAc...) asparagine glycosylation. Intrachain disulfides connect Cys197–Cys217, Cys221–Cys299, and Cys318–Cys394. The helical transmembrane segment at 238–258 threads the bilayer; it reads IAAFGAVTGLCTLFTLATFVA. The Cytoplasmic segment spans residues 259–265; sequence DWRNSNR. The chain crosses the membrane as a helical span at residues 266-286; it reads YPAVILFYVNACFFVGSIGWL. Topologically, residues 287 to 318 are extracellular; the sequence is AQFMDGARREIVCRADGTMRFGEPTSSETLSC. A helical membrane pass occupies residues 319–339; sequence VIIFVIVYYALMAGVVWFVVL. At 340-362 the chain is on the cytoplasmic side; it reads TYAWHTSFKALGTTYQPLSGKTS. A helical transmembrane segment spans residues 363–383; that stretch reads YFHLLTWSLPFVLTVAILAVA. Topologically, residues 384–406 are extracellular; that stretch reads QVDGDSVSGICFVGYKNYRYRAG. Position 398 (Tyr398) interacts with cholesterol. A helical membrane pass occupies residues 407–427; sequence FVLAPIGLVLIVGGYFLIRGV. At 428-455 the chain is on the cytoplasmic side; it reads MTLFSIKSNHPGLLSEKAASKINETMLR. The helical transmembrane segment at 456 to 476 threads the bilayer; sequence LGIFGFLAFGFVLITFSCHFY. The Extracellular segment spans residues 477-528; it reads DFFNQAEWERSFRDYVLCQANVTIGLPTKKPIPDCEIKNRPSLLVEKINLFA. A disulfide bond links Cys494 and Cys511. Residue Asn497 is glycosylated (N-linked (GlcNAc...) asparagine). A helical transmembrane segment spans residues 529–549; it reads MFGTGIAMSTWVWTKATLLIW. The interval 542 to 573 is interaction with BBS5 and BBS7; the sequence is TKATLLIWRRTWCRLTGHSDDEPKRIKKSKMI. At 550–793 the chain is on the cytoplasmic side; that stretch reads RRTWCRLTGH…AEILDADSDF (244 aa). Phosphoserine occurs at positions 560, 578, and 594. The segment at 574–657 is required for interaction with PRKACA; the sequence is AKAFSKRREL…TPVPPEEQAN (84 aa). The interval 585–597 is interaction with DLG5; sequence QNPGQELSFSMHT. A Phosphothreonine modification is found at Thr597. Ser599 and Ser642 each carry phosphoserine. A phosphothreonine mark is found at Thr644 and Thr648. Position 666 is a phosphoserine (Ser666). Residues 674 to 684 are compositionally biased toward basic residues; the sequence is GRKKKRRKRKK. The tract at residues 674–703 is disordered; it reads GRKKKRRKRKKEVCPLRPAPELHHSAPVPA.

It belongs to the G-protein coupled receptor Fz/Smo family. Homodimer. Interacts (via C-terminus) with protein kinase A catalytic subunit PRKACA; interacts with free PRKACA subunits and the interaction leads to sequestration of PRKACA at the membrane, preventing PRKACA-mediated phosphorylation of GLI transcription factors. Interacts with ARRB2. Interacts with BBS5 and BBS7; the interactions are indicative for the association of SMO with the BBsome complex to facilitate ciliary localization of SMO. Interacts with KIF7, DLG5 and SDCBP. Interacts with GAS8/DRC4. Post-translationally, phosphorylation by GRK kinases is required for interaction with protein kinase A catalytic subunit PRKACA. In terms of tissue distribution, during early somite stages of embryonic development, modestly up-regulated in the cells of the node (at protein level).

Its subcellular location is the cell membrane. The protein resides in the cell projection. The protein localises to the cilium. G protein-coupled receptor which associates with the patched protein (PTCH) to transduce hedgehog protein signaling. Binding of sonic hedgehog (SHH) to its receptor patched prevents inhibition of smoothened (SMO) by patched. When active, SMO binds to and sequesters protein kinase A catalytic subunit PRKACA at the cell membrane, preventing PRKACA-mediated phosphorylation of GLI transcription factors which releases the GLI proteins from PRKACA-mediated inhibition and allows for transcriptional activation of hedgehog pathway target genes. Required for the accumulation of KIF7, GLI2 and GLI3 in the cilia. Interacts with DLG5 at the ciliary base to induce the accumulation of KIF7 and GLI2 at the ciliary tip for GLI2 activation. The polypeptide is Protein smoothened (Smo) (Mus musculus (Mouse)).